Consider the following 158-residue polypeptide: uncharacterized protein (158 aa).

Residues 1 to 30 (MNKKFLKCGTLFLISCSILGSTIPAVTVFS) form the signal peptide.

This is an uncharacterized protein from Streptococcus pneumoniae serotype 2 (strain D39 / NCTC 7466).